The chain runs to 103 residues: UPF0235 protein RL4503 (103 aa).

This sequence belongs to the UPF0235 family.

This Rhizobium johnstonii (strain DSM 114642 / LMG 32736 / 3841) (Rhizobium leguminosarum bv. viciae) protein is UPF0235 protein RL4503.